The sequence spans 281 residues: Ermin (281 aa).

Polar residues-rich tracts occupy residues 1–12, 21–31, and 135–147; these read MTDTPETLSGTE, NGQQPSSQTRQ, and AQQQ…DAST. 3 disordered regions span residues 1–80, 110–147, and 167–248; these read MTDT…KILN, REGH…DAST, and KCDE…GDIA. Positions 169 to 197 are enriched in acidic residues; that stretch reads DEEEEEEEEVWNEEINEEDVDECAEEEDE. Positions 198-223 are enriched in basic and acidic residues; the sequence is VRVIEFKRKHREGSPLKEESLAREDS. Phosphoserine occurs at positions 211, 223, 227, and 230. Thr-234 carries the phosphothreonine modification. Positions 262 to 281 are binds actin; that stretch reads KIRKGNTKQRIDEFESMMHL.

Binds actin. In terms of tissue distribution, brain and spinal cord. Exclusively expressed by the oligodendrocytes. Appears at a late stage during myelination, and in the mature nerves, it is localized to the outer cytoplasmic lip of the myelin sheath and the paranodal loops.

It is found in the cytoplasm. It localises to the cytoskeleton. Its function is as follows. Plays a role in cytoskeletal rearrangements during the late wrapping and/or compaction phases of myelinogenesis as well as in maintenance and stability of myelin sheath in the adult. May play an important role in late-stage oligodendroglia maturation, myelin/Ranvier node formation during CNS development, and in the maintenance and plasticity of related structures in the mature CNS. This chain is Ermin (Ermn), found in Mus musculus (Mouse).